A 208-amino-acid polypeptide reads, in one-letter code: Uracil phosphoribosyltransferase (208 aa).

Residues Arg78, Arg103, and 130–138 each bind 5-phospho-alpha-D-ribose 1-diphosphate; that span reads DPMLATGGS. Uracil is bound by residues Ile193 and 198–200; that span reads GDA. Asp199 serves as a coordination point for 5-phospho-alpha-D-ribose 1-diphosphate.

Belongs to the UPRTase family. The cofactor is Mg(2+).

It carries out the reaction UMP + diphosphate = 5-phospho-alpha-D-ribose 1-diphosphate + uracil. It participates in pyrimidine metabolism; UMP biosynthesis via salvage pathway; UMP from uracil: step 1/1. Allosterically activated by GTP. In terms of biological role, catalyzes the conversion of uracil and 5-phospho-alpha-D-ribose 1-diphosphate (PRPP) to UMP and diphosphate. The sequence is that of Uracil phosphoribosyltransferase from Pasteurella multocida (strain Pm70).